Here is a 42-residue protein sequence, read N- to C-terminus: MRDLKTYLSVAPVLSTLWFGALAGLLIEINRFFPDALTFPFF.

A helical membrane pass occupies residues 7-27; it reads YLSVAPVLSTLWFGALAGLLI.

The protein belongs to the PsaJ family.

The protein resides in the plastid. It localises to the chloroplast thylakoid membrane. In terms of biological role, may help in the organization of the PsaE and PsaF subunits. This is Photosystem I reaction center subunit IX from Guizotia abyssinica (Niger).